Here is a 772-residue protein sequence, read N- to C-terminus: Magnetosome formation protease MamE (772 aa).

Topologically, residues 1 to 21 (MTMFNGDVEDGGRSNVSCGKD) are cytoplasmic. The chain crosses the membrane as a helical span at residues 22-42 (LKRYLMLMGVVALVVLFGAFI). Over 43-772 (YRQSSGGLRL…RNGQEFWIVL (730 aa)) the chain is Lumenal. Active-site charge relay system residues include H187, D220, and S296. Residues 374–397 (IAAGTPSPHVDGRQNMDCSNCHDI) carry the MCR (magnetochrome) 1 motif. Residues C391, C394, H395, C437, C440, H441, C488, C491, and H492 each contribute to the heme site. 2 consecutive short sequence motifs (MCR) follow at residues 420 to 443 (IPAN…CHQF) and 470 to 494 (AIRA…CHQI). The region spanning 445–558 (GGAAAGPIAF…ALTPLTQRLG (114 aa)) is the Cytochrome c domain. 2 consecutive PDZ domains span residues 522–626 (AINI…LRAG) and 696–765 (GATP…HRNG).

The protein in the N-terminal section; belongs to the peptidase S1C family. As to quaternary structure, might interact with MamB via PDZ1. Requires heme as cofactor. The protein isolated from magnetosome membranes has a molecular weight of about 36.3 kDa, probably due to C-terminal cleavage. Subject to autocatalytic cleavage; cleavage also requires MamO; these may be the same event.

The protein resides in the magnetosome membrane. Its function is as follows. Acts at 2 distinct steps of magnetosome formation; required for correct localization of proteins to the magnetosome while the protease activity is required for maturation of small magnetite crystals into larger, functional ones. Probably cleaves at least itself, MamO and MamP; cleavage requires the putative transprot domain of MamO. Involved in localization of some proteins (at least MamA, MamC, MamF, MamI and MamJ) to the magnetosome. One of 7 genes (mamLQBIEMO) able to induce magnetosome membrane biogenesis; coexpression of mamLQRBIEMO in a deletion of the 17 gene mamAB operon restores magnetosome vesicle formation but not magnetite biosynthesis. This is Magnetosome formation protease MamE from Magnetospirillum gryphiswaldense (strain DSM 6361 / JCM 21280 / NBRC 15271 / MSR-1).